The primary structure comprises 382 residues: Alkanesulfonate monooxygenase (382 aa).

Belongs to the SsuD family.

It carries out the reaction an alkanesulfonate + FMNH2 + O2 = an aldehyde + FMN + sulfite + H2O + 2 H(+). Its function is as follows. Catalyzes the desulfonation of aliphatic sulfonates. This chain is Alkanesulfonate monooxygenase, found in Pseudomonas putida (strain ATCC 700007 / DSM 6899 / JCM 31910 / BCRC 17059 / LMG 24140 / F1).